The following is a 182-amino-acid chain: ADP-ribosylation factor-like protein 3 (182 aa).

A lipid anchor (N-myristoyl glycine) is attached at Gly2. Position 5 is a phosphoserine (Ser5). Residues 24 to 31 (GLDNAGKT), Thr48, 67 to 71 (DIGGQ), Gly70, 126 to 129 (NKQD), and 159 to 161 (SAL) each bind GTP. Mg(2+) contacts are provided by Thr31 and Thr48.

It belongs to the small GTPase superfamily. Arf family. In terms of assembly, found in a complex with ARL3, RP2 and UNC119 (or UNC119B); RP2 induces hydrolysis of GTP ARL3 in the complex, leading to the release of UNC119 (or UNC119B). Interacts with RP2; interaction is direct and stimulated with the activated GTP-bound form of ARL3. Interacts with SYS1. Interacts with ARL2BP; the GTP-bound form interacts with ARL2BP. Microtubule-associated protein. Does not interact with TBCC. Interacts with RP2. Interacts with PDE6D; the interaction occurs specifically with the GTP-bound form of ARL3. Interacts with GGA1; the interaction recruits PKD1:PKD2 complex to trans-Golgi network and is required for ciliary targeting of PKD1:PKD2 complex. Interacts with DNAAF9.

The protein resides in the golgi apparatus membrane. Its subcellular location is the cytoplasm. The protein localises to the cytoskeleton. It is found in the spindle. It localises to the nucleus. The protein resides in the microtubule organizing center. Its subcellular location is the centrosome. The protein localises to the cell projection. It is found in the cilium. Its function is as follows. Small GTP-binding protein which cycles between an inactive GDP-bound and an active GTP-bound form, and the rate of cycling is regulated by guanine nucleotide exchange factors (GEF) and GTPase-activating proteins (GAP). Required for normal cytokinesis and cilia signaling. Requires assistance from GTPase-activating proteins (GAPs) like RP2 and PDE6D, in order to cycle between inactive GDP-bound and active GTP-bound forms. Required for targeting proteins to the cilium, including myristoylated NPHP3 and prenylated INPP5E. Targets NPHP3 to the ciliary membrane by releasing myristoylated NPHP3 from UNC119B cargo adapter into the cilium. Required for PKD1:PKD2 complex targeting from the trans-Golgi network to the cilium. The chain is ADP-ribosylation factor-like protein 3 (ARL3) from Bos taurus (Bovine).